Consider the following 346-residue polypeptide: NADH-ubiquinone oxidoreductase chain 2 (346 aa).

The next 11 helical transmembrane spans lie at 3–23 (PLIL…VMAS), 25–45 (HWLM…PILM), 59–79 (YFLT…INLM), 96–116 (IIMT…FWVP), 122–142 (ISLT…MSIL), 149–169 (INLN…GWGG), 178–198 (IMAY…VYNP), 200–220 (LTML…MLFI), 237–257 (APLI…LPPL), 274–294 (SSII…YFYM), and 322–342 (ITLL…TPML).

This sequence belongs to the complex I subunit 2 family. As to quaternary structure, core subunit of respiratory chain NADH dehydrogenase (Complex I) which is composed of 45 different subunits. Interacts with TMEM242.

It is found in the mitochondrion inner membrane. It carries out the reaction a ubiquinone + NADH + 5 H(+)(in) = a ubiquinol + NAD(+) + 4 H(+)(out). In terms of biological role, core subunit of the mitochondrial membrane respiratory chain NADH dehydrogenase (Complex I) which catalyzes electron transfer from NADH through the respiratory chain, using ubiquinone as an electron acceptor. Essential for the catalytic activity and assembly of complex I. In Equus asinus (Donkey), this protein is NADH-ubiquinone oxidoreductase chain 2.